An 872-amino-acid chain; its full sequence is MSQLTPMMRQYLEIKAGYPDAILFFRLGDFYEMFLDDAVKASRILDITLTSRNKNSDGADVPLCGIPYHSATPYIAKLIEAGEKVAICEQVEDPKSVKGIVRREVVKVITPGLVVDSSNLSPKENNYLLSLYCDDATTWGLSYLDLSTGEFRVTELDGFDAAVAEVACVKPREIILPAVFRENGRMKELMPVTAGLATTFVDDWVYDLDYCKRLIGSHFGGASPSALGCDGLNTGLYAICAVLHYLQETQKGRAGHVNSIIPYTNREYLVLDESTRRNLELTATLAEGKRKGSLLGLMDRTTTAMGGRKMKQWINYPLVTIQSITERQDAIEEFVQDPSRRTALVFLLNGVYDLERLNGRISLASAGAKDLVAMKESLARIPGIKELLASSSSVLLRRLNEGLNPLPDLVGLIAGGIVENPPFVLRDGGIIADGYNAELDELRAISREGKGFIARLEAQEKGRTGINSLKIRYNKVFGYYIEVTKTNLTSIPADYIRKQTLANAERYITPELKEYEDKVLGAEDRIRELEFSLFQEIRETVTGHGEIVARTADCLATLDVLASLAELAHERNYCRPLVDDGTTLFISEGRHPVIEAMHQGERFVPNDTLLDNGENQLIIITGPNMAGKSTFMRQVALITLMAQMGSFVPATEAHISLVDRIFTRVGASDNLARGQSTFMVEMMESANILRHATPKSLVILDEIGRGTSTFDGVSIAWAVAEFLHDNDKHAAKTLFATHYHELTELAVTRKRIKNFNIAVKEWNEQIIFLRKIVSGGASHSYGIQVARLAGLPLEVIERAKEILQNLEKGEFAEEGIPRIARGKKSAGSAPASQLSLFDSGEDMLRKRLKGMDVTTLTPLEALNLLDELKRMV.

622 to 629 (GPNMAGKS) provides a ligand contact to ATP.

Belongs to the DNA mismatch repair MutS family.

Functionally, this protein is involved in the repair of mismatches in DNA. It is possible that it carries out the mismatch recognition step. This protein has a weak ATPase activity. The protein is DNA mismatch repair protein MutS of Geotalea uraniireducens (strain Rf4) (Geobacter uraniireducens).